We begin with the raw amino-acid sequence, 166 residues long: Large ribosomal subunit protein uL10 (166 aa).

Belongs to the universal ribosomal protein uL10 family. Part of the ribosomal stalk of the 50S ribosomal subunit. The N-terminus interacts with L11 and the large rRNA to form the base of the stalk. The C-terminus forms an elongated spine to which L12 dimers bind in a sequential fashion forming a multimeric L10(L12)X complex.

Functionally, forms part of the ribosomal stalk, playing a central role in the interaction of the ribosome with GTP-bound translation factors. This is Large ribosomal subunit protein uL10 from Staphylococcus aureus (strain JH1).